The following is a 232-amino-acid chain: Large ribosomal subunit protein uL1 (232 aa).

Belongs to the universal ribosomal protein uL1 family. As to quaternary structure, part of the 50S ribosomal subunit.

Functionally, binds directly to 23S rRNA. The L1 stalk is quite mobile in the ribosome, and is involved in E site tRNA release. Its function is as follows. Protein L1 is also a translational repressor protein, it controls the translation of the L11 operon by binding to its mRNA. This Christiangramia forsetii (strain DSM 17595 / CGMCC 1.15422 / KT0803) (Gramella forsetii) protein is Large ribosomal subunit protein uL1.